The following is a 1127-amino-acid chain: Disease resistance protein RPS6 (1127 aa).

The residue at position 1 (M1) is an N-acetylmethionine. One can recognise a TIR domain in the interval W12–M176. E87 is an active-site residue. LRR repeat units lie at residues M197 to K221, I540 to K563, P587 to P609, E610 to L632, A633 to T656, L658 to L679, N680 to S704, S766 to L790, Y791 to L813, D814 to S834, and T835 to L857.

In terms of assembly, interacts with EDS1. In terms of tissue distribution, ubiquitous.

The catalysed reaction is NAD(+) + H2O = ADP-D-ribose + nicotinamide + H(+). Functionally, disease resistance (R) protein that specifically recognizes the hopA1 type III effector avirulence protein from Pseudomonas syringae. Resistance proteins guard the plant against pathogens that contain an appropriate avirulence protein via an indirect interaction with this avirulence protein. That triggers a defense system including the hypersensitive response, which restricts the pathogen growth. This is Disease resistance protein RPS6 from Arabidopsis thaliana (Mouse-ear cress).